The following is a 598-amino-acid chain: Urease subunit alpha (598 aa).

Residues 136–598 (GGLDTHVHWL…APLAQRYFLF (463 aa)) form the Urease domain. Positions 141, 143, and 223 each coordinate Ni(2+). K223 bears the N6-carboxylysine mark. H225 contributes to the substrate binding site. Ni(2+) contacts are provided by H252 and H278. H326 (proton donor) is an active-site residue. Residue D366 participates in Ni(2+) binding.

It belongs to the metallo-dependent hydrolases superfamily. Urease alpha subunit family. As to quaternary structure, heterotrimer of UreA (gamma), UreB (beta) and UreC (alpha) subunits. Three heterotrimers associate to form the active enzyme. Requires Ni cation as cofactor. In terms of processing, carboxylation allows a single lysine to coordinate two nickel ions.

The protein localises to the cytoplasm. It carries out the reaction urea + 2 H2O + H(+) = hydrogencarbonate + 2 NH4(+). The protein operates within nitrogen metabolism; urea degradation; CO(2) and NH(3) from urea (urease route): step 1/1. This Ureaplasma urealyticum serovar 10 (strain ATCC 33699 / Western) protein is Urease subunit alpha.